The primary structure comprises 356 residues: Holliday junction branch migration complex subunit RuvB (356 aa).

Residues 13–197 (LPPARRMLSA…FGIVARLEFY (185 aa)) form a large ATPase domain (RuvB-L) region. ATP-binding positions include L36, R37, G78, K81, T82, T83, 144–146 (EDY), R187, Y197, and R234. T82 serves as a coordination point for Mg(2+). Residues 198-268 (TPEELARIVK…IANRALAMLD (71 aa)) form a small ATPAse domain (RuvB-S) region. The tract at residues 271 to 356 (PQGFDLMDRK…RGNAENLFEE (86 aa)) is head domain (RuvB-H). R326 and R331 together coordinate DNA.

It belongs to the RuvB family. In terms of assembly, homohexamer. Forms an RuvA(8)-RuvB(12)-Holliday junction (HJ) complex. HJ DNA is sandwiched between 2 RuvA tetramers; dsDNA enters through RuvA and exits via RuvB. An RuvB hexamer assembles on each DNA strand where it exits the tetramer. Each RuvB hexamer is contacted by two RuvA subunits (via domain III) on 2 adjacent RuvB subunits; this complex drives branch migration. In the full resolvosome a probable DNA-RuvA(4)-RuvB(12)-RuvC(2) complex forms which resolves the HJ.

It localises to the cytoplasm. It catalyses the reaction ATP + H2O = ADP + phosphate + H(+). In terms of biological role, the RuvA-RuvB-RuvC complex processes Holliday junction (HJ) DNA during genetic recombination and DNA repair, while the RuvA-RuvB complex plays an important role in the rescue of blocked DNA replication forks via replication fork reversal (RFR). RuvA specifically binds to HJ cruciform DNA, conferring on it an open structure. The RuvB hexamer acts as an ATP-dependent pump, pulling dsDNA into and through the RuvAB complex. RuvB forms 2 homohexamers on either side of HJ DNA bound by 1 or 2 RuvA tetramers; 4 subunits per hexamer contact DNA at a time. Coordinated motions by a converter formed by DNA-disengaged RuvB subunits stimulates ATP hydrolysis and nucleotide exchange. Immobilization of the converter enables RuvB to convert the ATP-contained energy into a lever motion, pulling 2 nucleotides of DNA out of the RuvA tetramer per ATP hydrolyzed, thus driving DNA branch migration. The RuvB motors rotate together with the DNA substrate, which together with the progressing nucleotide cycle form the mechanistic basis for DNA recombination by continuous HJ branch migration. Branch migration allows RuvC to scan DNA until it finds its consensus sequence, where it cleaves and resolves cruciform DNA. The polypeptide is Holliday junction branch migration complex subunit RuvB (Polaromonas naphthalenivorans (strain CJ2)).